Here is an 893-residue protein sequence, read N- to C-terminus: TBC domain-containing protein kinase-like protein (893 aa).

Residues 1–274 enclose the Protein kinase domain; it reads MFPLRDTEMG…EELMHDHLFS (274 aa). One can recognise a Rab-GAP TBC domain in the interval 466–651; the sequence is DIPPLLRGIT…HLWDTLLLGN (186 aa). A Rhodanese domain is found at 790–889; it reads SKPKLLVVDI…IKPTGLLTVP (100 aa).

It belongs to the protein kinase superfamily. As to quaternary structure, component of the FERRY complex.

Its subcellular location is the cytoplasm. The protein localises to the cytoskeleton. It is found in the spindle. The protein resides in the midbody. It localises to the early endosome. Its function is as follows. Component of the FERRY complex (Five-subunit Endosomal Rab5 and RNA/ribosome intermediary). The FERRY complex directly interacts with mRNAs and RAB5A, and functions as a RAB5A effector involved in the localization and the distribution of specific mRNAs most likely by mediating their endosomal transport. The complex recruits mRNAs and ribosomes to early endosomes through direct mRNA-interaction. Also involved in the modulation of mTOR signaling and expression of mTOR complex components. Involved in the control of actin-cytoskeleton organization. The protein is TBC domain-containing protein kinase-like protein of Gallus gallus (Chicken).